Here is a 152-residue protein sequence, read N- to C-terminus: Anaerobic nitrite reductase HBI (152 aa).

Positions 2–151 (ALTEKQEALL…LVATIKAEMK (150 aa)) constitute a Globin domain. The short motif at 35–39 (EAAPE) is the Homodimerization element. Residues serine 45, lysine 59, histidine 63, arginine 93, and histidine 98 each contribute to the heme b site. Positions 105–117 (DPHFEVMKGALLG) match the Homodimerization motif.

The protein belongs to the plant globin family. As to quaternary structure, homodimer. Heme b is required as a cofactor. In terms of tissue distribution, root nodules.

It localises to the cytoplasm. The protein resides in the nucleus. It carries out the reaction Fe(III)-heme b-[protein] + nitric oxide + H2O = Fe(II)-heme b-[protein] + nitrite + 2 H(+). Its function is as follows. Phytoglobin that reduces nitrite to nitric oxide (NO) under anoxic conditions (e.g. during flooding or in waterlogged soil) and upon root nodulation. Required for general plant development and during nodulation, especially for the onset of symbiosis. Monitors nitric oxide (NO) levels during early phase of the nitrogen-fixing symbiosis and buffers oxygen in functioning nodules. May not function as an oxygen storage or transport protein. Has an unusually high affinity for O(2) through a hexacoordinate heme iron because of a very low dissociation constant. This chain is Anaerobic nitrite reductase HBI, found in Casuarina glauca (Swamp oak).